Consider the following 390-residue polypeptide: MPPKQHRHQKKDKNDNALQNTIGFVPPGATLASVSGYRPPDAFVNRIDRNIPVPARLRHTPVSLIEAVNDFHYAMMNDEERNNFYYEVLKKHVTPETGVLEIGAGSGLLSLMAAKLGAKWVVAVEGSEELAKLARENIRANNMEHQVKVLHMMSTELKSKHLPEPPDVLLSEIFGTMMLGESALDYVVDVRNRLLKPTTKIIPQFGTQYAVPIECDALHRISSVSGWRDLDLKHMMTLQDTVSIVFAKHYGIRMNSVNFRRLSDPIELFRVDFSSSNRNDIPRRKHFDVVAKESGTAHAMLFYWKVTDDEFVMSTDPEDTVNNFPRDMQWGQALQLLDASNGPLPTPVVFTEGKNYNFECNFSGDRVILHMQLCPESGNGEMTECEGKTT.

Over residues 1-11 (MPPKQHRHQKK) the composition is skewed to basic residues. Residues 1 to 20 (MPPKQHRHQKKDKNDNALQN) are disordered. Residues 55–372 (ARLRHTPVSL…SGDRVILHMQ (318 aa)) enclose the SAM-dependent MTase PRMT-type domain. Residues Glu-172 and Glu-181 contribute to the active site.

The protein belongs to the class I-like SAM-binding methyltransferase superfamily. Protein arginine N-methyltransferase family. PRMT7 subfamily. In terms of assembly, present in large multiprotein complexes.

Its subcellular location is the cytoplasm. Arginine methyltransferase that specifically catalyzes the formation of omega-N monomethylarginine (MMA). Has activity toward multiple substrates in vitro. Able to mediate the arginine methylation of histones and myelin basic protein (MBP) in vitro; the relevance of such results is however unclear in vivo. The sequence is that of Protein arginine N-methyltransferase 7 (PRMT7) from Trypanosoma brucei brucei (strain 927/4 GUTat10.1).